Here is a 464-residue protein sequence, read N- to C-terminus: MPFKTLSRRTFLTASSALAFLHTPFARALPARQSVNINDYNPHDWIASFKQAFSEGQTVVVPAGFVCDNINTGIFIPPGKTLHILGSLRGNGRGRFVLQDGSQVTGGEGGGMHNITLDVRGSDCTIKGLAMSGFGPVMQIYIGGKNKRVMRNLTIDNLTVSHANYAILRQGFHNQIIGANITNCKFSDLQGDAIEWNVAINDSDILISDHVIERINCTNGKINWGIGIGLAGSTYDNNYPEDQAVKNFVVANITGSDCRQLIHVENGKHFVIRNINARNITPDFSKKAGIDNATVAIYGCDNFVIDNIEMINSAGMLIGYGVIKGKYLSIPQNFRVNNIQLDNTHLAYKLRGIQISAGNAVSFVSLTNIEMKRASLELHNKPQHLFMRNINVMQESSVGPALSMNFDMRKDVRGVFMAKKETLLSLANVHAVNERGQSSVDIDRINHHIVNVEKINFRLPERRE.

The protein operates within slime biogenesis; slime polysaccharide biosynthesis. This Shigella flexneri protein is Colanic acid biosynthesis protein WcaM (wcaM).